The chain runs to 399 residues: Argininosuccinate synthase (399 aa).

9 to 17 provides a ligand contact to ATP; it reads AYSGGLDTS. L-citrulline is bound at residue Tyr-87. Gly-117 contacts ATP. Thr-119, Asn-123, and Asp-124 together coordinate L-aspartate. Asn-123 serves as a coordination point for L-citrulline. L-citrulline is bound by residues Arg-127, Ser-176, Ser-185, Glu-261, and Tyr-273.

Belongs to the argininosuccinate synthase family. Type 1 subfamily. In terms of assembly, homotetramer.

The protein resides in the cytoplasm. The enzyme catalyses L-citrulline + L-aspartate + ATP = 2-(N(omega)-L-arginino)succinate + AMP + diphosphate + H(+). It participates in amino-acid biosynthesis; L-arginine biosynthesis; L-arginine from L-ornithine and carbamoyl phosphate: step 2/3. In Chlorobium chlorochromatii (strain CaD3), this protein is Argininosuccinate synthase.